Reading from the N-terminus, the 213-residue chain is ATP phosphoribosyltransferase (213 aa).

It belongs to the ATP phosphoribosyltransferase family. Short subfamily. Heteromultimer composed of HisG and HisZ subunits.

The protein resides in the cytoplasm. It catalyses the reaction 1-(5-phospho-beta-D-ribosyl)-ATP + diphosphate = 5-phospho-alpha-D-ribose 1-diphosphate + ATP. The protein operates within amino-acid biosynthesis; L-histidine biosynthesis; L-histidine from 5-phospho-alpha-D-ribose 1-diphosphate: step 1/9. Functionally, catalyzes the condensation of ATP and 5-phosphoribose 1-diphosphate to form N'-(5'-phosphoribosyl)-ATP (PR-ATP). Has a crucial role in the pathway because the rate of histidine biosynthesis seems to be controlled primarily by regulation of HisG enzymatic activity. The polypeptide is ATP phosphoribosyltransferase (hisG) (Bacillus subtilis (strain 168)).